We begin with the raw amino-acid sequence, 402 residues long: Acetate kinase (402 aa).

Asn-10 is a Mg(2+) binding site. An ATP-binding site is contributed by Lys-17. A substrate-binding site is contributed by Arg-89. Asp-148 functions as the Proton donor/acceptor in the catalytic mechanism. ATP contacts are provided by residues 208-212, 283-285, and 334-338; these read HLGNG, DCR, and GIGEN. Glu-389 lines the Mg(2+) pocket.

It belongs to the acetokinase family. Homodimer. The cofactor is Mg(2+). Mn(2+) is required as a cofactor.

The protein resides in the cytoplasm. It catalyses the reaction acetate + ATP = acetyl phosphate + ADP. It functions in the pathway metabolic intermediate biosynthesis; acetyl-CoA biosynthesis; acetyl-CoA from acetate: step 1/2. Functionally, catalyzes the formation of acetyl phosphate from acetate and ATP. Can also catalyze the reverse reaction. This chain is Acetate kinase, found in Actinobacillus pleuropneumoniae serotype 5b (strain L20).